The primary structure comprises 206 residues: Emopamil-binding protein-like (206 aa).

4 helical membrane-spanning segments follow: residues 10–30 (EAGS…ALGL), 42–62 (WVLA…GAFV), 101–121 (LEIL…YAIV), and 165–185 (LWVY…LLLW). In terms of domain architecture, EXPERA spans 39–184 (VERWVLAWLC…LWVLIPGLLL (146 aa)).

It belongs to the EBP family. Homodimer.

It localises to the endoplasmic reticulum membrane. Functionally, does not possess sterol isomerase activity and does not bind sigma ligands. This chain is Emopamil-binding protein-like (Ebpl), found in Mus musculus (Mouse).